A 328-amino-acid polypeptide reads, in one-letter code: PDZ and LIM domain protein 1 (328 aa).

At T2 the chain carries N-acetylthreonine. The PDZ domain maps to 3 to 85 (TLQIVLQGPG…NMTLTVARSE (83 aa)). A phosphoserine mark is found at S90 and S130. Y144 bears the Phosphotyrosine mark. An LIM zinc-binding domain is found at 257 to 316 (PMCDKCGTGIVGVFVKLRERHRHPECYVCTDCGTNLKQKGHFFVEDQIYCEKHARERVTP). Zn(2+) is bound by residues C259, C262, H279, C282, C285, C288, C306, and H309. A Phosphothreonine modification is found at T315. At Y320 the chain carries Phosphotyrosine.

In terms of assembly, interacts with ACTN1, ACTN2 and ACTN4. Interacts with PDLIM4.

It is found in the cytoplasm. Its subcellular location is the cytoskeleton. The protein localises to the myofibril. It localises to the sarcomere. The protein resides in the z line. Cytoskeletal protein that may act as an adapter that brings other proteins (like kinases) to the cytoskeleton. Involved in assembly, disassembly and directioning of stress fibers in fibroblasts. Required for the localization of ACTN1 and PALLD to stress fibers. Required for cell migration and in maintaining cell polarity of fibroblasts. The sequence is that of PDZ and LIM domain protein 1 (PDLIM1) from Bos taurus (Bovine).